A 204-amino-acid polypeptide reads, in one-letter code: NADH-quinone oxidoreductase subunit C (204 aa).

This sequence belongs to the complex I 30 kDa subunit family. In terms of assembly, NDH-1 is composed of 14 different subunits. Subunits NuoB, C, D, E, F, and G constitute the peripheral sector of the complex.

The protein localises to the cell inner membrane. It catalyses the reaction a quinone + NADH + 5 H(+)(in) = a quinol + NAD(+) + 4 H(+)(out). Its function is as follows. NDH-1 shuttles electrons from NADH, via FMN and iron-sulfur (Fe-S) centers, to quinones in the respiratory chain. The immediate electron acceptor for the enzyme in this species is believed to be ubiquinone. Couples the redox reaction to proton translocation (for every two electrons transferred, four hydrogen ions are translocated across the cytoplasmic membrane), and thus conserves the redox energy in a proton gradient. The polypeptide is NADH-quinone oxidoreductase subunit C (Polaromonas naphthalenivorans (strain CJ2)).